The primary structure comprises 89 residues: Small ribosomal subunit protein uS15 (89 aa).

The protein belongs to the universal ribosomal protein uS15 family. Part of the 30S ribosomal subunit. Forms a bridge to the 50S subunit in the 70S ribosome, contacting the 23S rRNA.

Its function is as follows. One of the primary rRNA binding proteins, it binds directly to 16S rRNA where it helps nucleate assembly of the platform of the 30S subunit by binding and bridging several RNA helices of the 16S rRNA. In terms of biological role, forms an intersubunit bridge (bridge B4) with the 23S rRNA of the 50S subunit in the ribosome. The sequence is that of Small ribosomal subunit protein uS15 from Buchnera aphidicola subsp. Schizaphis graminum (strain Sg).